Reading from the N-terminus, the 239-residue chain is Putative GEM-like protein 3 (239 aa).

Residues His29–Ala68 are disordered. The GRAM domain occupies Lys128 to Ile191.

Belongs to the GEM family.

This Arabidopsis thaliana (Mouse-ear cress) protein is Putative GEM-like protein 3.